We begin with the raw amino-acid sequence, 440 residues long: MEAVIKVISSACKTYCGKTSPSKKEIGAMLSLLQKEGLLMSPSDLYSPRSWDPITAALTQRAMELGKSGELKTWGLVLGALEAAREEQEQVTSEQAKFWLGLGGGRVSPPGPECIEKPATERRIDKGEEVGETTVQRDAKMAPEETATPKTVGTSCYYCGAAIGCNCATASAPPPPYVGSGLYPSLAGVGEQQGQGGDTPRGAEQPRAGRGAGHRGLRRPAGRGQRVRPAGGAALMAGQFDSEDRGSWYWGRLSRGDAVSLLQGQRHGTFLVRDSGSIPGDFVLSVSESSRVSHYIVNSLGPAGGRRAGGEGPGAPGLNPTRFLIGDQVFDSLPSLLEFYKIHYLDTTTLIEPVSRSRQNSGVILRQEEVEYVRALFDFKGNDDGDLPFKKGDILKIRDKPEEQWWNAEDMDGKRGMIPVPYVEKCRPSSASVSTLTGGR.

A gag first part region spans residues 1–208 (MEAVIKVISS…TPRGAEQPRA (208 aa)). The short motif at 174–177 (PPPY) is the PPXY motif element. Residues 183–230 (YPSLAGVGEQQGQGGDTPRGAEQPRAGRGAGHRGLRRPAGRGQRVRPA) form a disordered region. The interval 209–437 (GRGAGHRGLR…PSSASVSTLT (229 aa)) is CRK. A compositionally biased stretch (basic residues) spans 212–221 (AGHRGLRRPA). Residues 248–354 (WYWGRLSRGD…LDTTTLIEPV (107 aa)) enclose the SH2 domain. Residues 368-428 (EEVEYVRALF…PVPYVEKCRP (61 aa)) form the SH3 domain. Positions 438–440 (GGR) are gag second part.

This is P47(GAG-CRK) protein from Avian sarcoma virus CT10 (Avian sarcoma virus (strain CT10)).